The following is a 91-amino-acid chain: MPRSTKKGPFIDHHLLKKVEEANANNSKRPIKTWSRRSVVMPDMVGLTIAIHNGRQHVPVLINENMVGHKLGEFAVTRSFRGHAADKKSKR.

It belongs to the universal ribosomal protein uS19 family.

Protein S19 forms a complex with S13 that binds strongly to the 16S ribosomal RNA. In Halorhodospira halophila (strain DSM 244 / SL1) (Ectothiorhodospira halophila (strain DSM 244 / SL1)), this protein is Small ribosomal subunit protein uS19.